Consider the following 185-residue polypeptide: Ribosome-recycling factor (185 aa).

Belongs to the RRF family.

It is found in the cytoplasm. Functionally, responsible for the release of ribosomes from messenger RNA at the termination of protein biosynthesis. May increase the efficiency of translation by recycling ribosomes from one round of translation to another. The sequence is that of Ribosome-recycling factor from Sodalis glossinidius (strain morsitans).